A 277-amino-acid chain; its full sequence is Thymidylate synthase (277 aa).

A dUMP-binding site is contributed by Arg-21. His-51 is a binding site for (6R)-5,10-methylene-5,6,7,8-tetrahydrofolate. 139-140 (RR) is a dUMP binding site. The active-site Nucleophile is the Cys-159. Residues 179-182 (RSAD), Asn-190, and 220-222 (HIY) each bind dUMP. Asp-182 is a (6R)-5,10-methylene-5,6,7,8-tetrahydrofolate binding site. Ala-276 contacts (6R)-5,10-methylene-5,6,7,8-tetrahydrofolate.

This sequence belongs to the thymidylate synthase family. Bacterial-type ThyA subfamily. As to quaternary structure, homodimer.

It is found in the cytoplasm. It catalyses the reaction dUMP + (6R)-5,10-methylene-5,6,7,8-tetrahydrofolate = 7,8-dihydrofolate + dTMP. It functions in the pathway pyrimidine metabolism; dTTP biosynthesis. Catalyzes the reductive methylation of 2'-deoxyuridine-5'-monophosphate (dUMP) to 2'-deoxythymidine-5'-monophosphate (dTMP) while utilizing 5,10-methylenetetrahydrofolate (mTHF) as the methyl donor and reductant in the reaction, yielding dihydrofolate (DHF) as a by-product. This enzymatic reaction provides an intracellular de novo source of dTMP, an essential precursor for DNA biosynthesis. The chain is Thymidylate synthase from Roseobacter denitrificans (strain ATCC 33942 / OCh 114) (Erythrobacter sp. (strain OCh 114)).